Reading from the N-terminus, the 109-residue chain is Thioredoxin (109 aa).

Residues 2-107 (SISQVIDTSF…LLNTLQKHLK (106 aa)) form the Thioredoxin domain. Residues C31 and C34 each act as nucleophile in the active site. An intrachain disulfide couples C31 to C34.

Belongs to the thioredoxin family.

It is found in the plastid. The protein localises to the chloroplast. Participates in various redox reactions through the reversible oxidation of its active center dithiol to a disulfide and catalyzes dithiol-disulfide exchange reactions. The sequence is that of Thioredoxin (trxA) from Griffithsia pacifica (Red alga).